We begin with the raw amino-acid sequence, 622 residues long: Glutamyl-tRNA(Gln) amidotransferase subunit E (622 aa).

It belongs to the GatB/GatE family. GatE subfamily. In terms of assembly, heterodimer of GatD and GatE.

It catalyses the reaction L-glutamyl-tRNA(Gln) + L-glutamine + ATP + H2O = L-glutaminyl-tRNA(Gln) + L-glutamate + ADP + phosphate + H(+). Its function is as follows. Allows the formation of correctly charged Gln-tRNA(Gln) through the transamidation of misacylated Glu-tRNA(Gln) in organisms which lack glutaminyl-tRNA synthetase. The reaction takes place in the presence of glutamine and ATP through an activated gamma-phospho-Glu-tRNA(Gln). The GatDE system is specific for glutamate and does not act on aspartate. The protein is Glutamyl-tRNA(Gln) amidotransferase subunit E of Halobacterium salinarum (strain ATCC 29341 / DSM 671 / R1).